The chain runs to 274 residues: Undecaprenyl-diphosphatase (274 aa).

The next 8 membrane-spanning stretches (helical) occupy residues 1 to 21, 48 to 68, 84 to 104, 108 to 128, 143 to 163, 187 to 207, 214 to 234, and 254 to 274; these read MDWF…FLPI, VVIQ…DFAG, LGVI…GDVI, LFRP…MWVI, IGLG…LWPG, FSFY…FIKS, IGLL…YLAI, and VIFG…NGGL.

The protein belongs to the UppP family.

It is found in the cell membrane. It catalyses the reaction di-trans,octa-cis-undecaprenyl diphosphate + H2O = di-trans,octa-cis-undecaprenyl phosphate + phosphate + H(+). Its function is as follows. Catalyzes the dephosphorylation of undecaprenyl diphosphate (UPP). Confers resistance to bacitracin. This chain is Undecaprenyl-diphosphatase, found in Deinococcus geothermalis (strain DSM 11300 / CIP 105573 / AG-3a).